The chain runs to 102 residues: uncharacterized protein (102 aa).

The next 3 membrane-spanning stretches (helical) occupy residues 1-21 (MVPL…LRPV), 42-62 (SIID…LILV), and 68-88 (SIHA…FSIV).

It is found in the membrane. This is an uncharacterized protein from Saccharomyces cerevisiae (strain ATCC 204508 / S288c) (Baker's yeast).